Here is a 209-residue protein sequence, read N- to C-terminus: Outer-membrane lipoprotein LolB (209 aa).

A signal peptide spans 1–21; sequence MNNMKTFKFLTALFATAILTA. The N-palmitoyl cysteine moiety is linked to residue Cys22. Cys22 is lipidated: S-diacylglycerol cysteine.

It belongs to the LolB family. Monomer.

The protein resides in the cell outer membrane. In terms of biological role, plays a critical role in the incorporation of lipoproteins in the outer membrane after they are released by the LolA protein. The chain is Outer-membrane lipoprotein LolB from Haemophilus influenzae (strain 86-028NP).